Reading from the N-terminus, the 409-residue chain is MTRFTTTLVAALAGANLAAAKCSYKWRAHAGDTCDSLSSDWSVQVSDFIKWNPSVGANCSNGVTAGQEYCVEDNGAGSKPTTPPTGSPTTLTTAVTTASSTPTQPTDGAPSPIQDGVAKDCKSAHSCKAWYKVQAGDTCDKIVSKYGAFSTDDFLKWNPAAGSDCTGLWVDYYVCVGVAGTPTSPTGSNPSKPSSTQAGVAKDCQKWYKVKSGDTCDKIKNQFNTFSLDDFLKWNPAAGKDCSGLWVDYFVCVGVPGTPTSPTGSDPSKPSPTQDGLTDKCTKFYKAQKGDTCQKIVDSLRTFTVSEFTSWNPAVGKDCTGIWVDYYYCIAVPGTPANPGPVRPSPVQDGITSKCNKYYKVQSGDYCDKIINKYNKAFNLEQLVSWNPAIGKDCSHLFVDFYICVGVQG.

The first 20 residues, 1–20 (MTRFTTTLVAALAGANLAAA), serve as a signal peptide directing secretion. Residues 24-71 (YKWRAHAGDTCDSLSSDWSVQVSDFIKWNPSVGANCSNGVTAGQEYCV) form the LysM 1 domain. N58 carries an N-linked (GlcNAc...) asparagine glycan. Positions 74–111 (NGAGSKPTTPPTGSPTTLTTAVTTASSTPTQPTDGAPS) are disordered. A compositionally biased stretch (low complexity) spans 87–106 (SPTTLTTAVTTASSTPTQPT). LysM domains follow at residues 129 to 176 (AWYK…YVCV), 206 to 253 (KWYK…FVCV), 283 to 330 (KFYK…YYCI), and 357 to 405 (KYYK…YICV).

It belongs to the secreted LysM effector family.

It is found in the secreted. Its subcellular location is the cell wall. Secreted effector that enables the plant pathogenic fungus to manipulate host defenses for successful infection. Required for the full virulence to infect insect hosts. In contrast to Blys5, Blys2 is not able to protect fungal hyphae against the hydrolytic activity of chitinase but plays an important role in evasion of insect immunities. Binds chitin. Coats and protects the cell walls of insect pathogens from host cell recognition. This chain is Secreted LysM effector Blys2, found in Beauveria bassiana (strain ARSEF 2860) (White muscardine disease fungus).